We begin with the raw amino-acid sequence, 244 residues long: Transcriptional activator protein PhzR (244 aa).

Residues 177–242 (AFNTDVEFSE…QAVSYAVALG (66 aa)) enclose the HTH luxR-type domain. The H-T-H motif DNA-binding region spans 201–220 (SEEIGVIMGVCTDTVNYHHR).

This sequence belongs to the autoinducer-regulated transcriptional regulatory protein family.

Its function is as follows. Positive regulator of phenazine antibiotic production. May activate the phenazine biosynthetic genes by binding to a DNA sequence upstream of them, or to an intermediate gene which, in turn, interacts with them. The chain is Transcriptional activator protein PhzR (phzR) from Pseudomonas fluorescens.